Here is a 155-residue protein sequence, read N- to C-terminus: Crossover junction endodeoxyribonuclease RuvC (155 aa).

Residues Asp7, Glu68, and Asp140 contribute to the active site. Residues Asp7, Glu68, and Asp140 each contribute to the Mg(2+) site.

The protein belongs to the RuvC family. In terms of assembly, homodimer which binds Holliday junction (HJ) DNA. The HJ becomes 2-fold symmetrical on binding to RuvC with unstacked arms; it has a different conformation from HJ DNA in complex with RuvA. In the full resolvosome a probable DNA-RuvA(4)-RuvB(12)-RuvC(2) complex forms which resolves the HJ. Mg(2+) serves as cofactor.

The protein resides in the cytoplasm. The enzyme catalyses Endonucleolytic cleavage at a junction such as a reciprocal single-stranded crossover between two homologous DNA duplexes (Holliday junction).. In terms of biological role, the RuvA-RuvB-RuvC complex processes Holliday junction (HJ) DNA during genetic recombination and DNA repair. Endonuclease that resolves HJ intermediates. Cleaves cruciform DNA by making single-stranded nicks across the HJ at symmetrical positions within the homologous arms, yielding a 5'-phosphate and a 3'-hydroxyl group; requires a central core of homology in the junction. The consensus cleavage sequence is 5'-(A/T)TT(C/G)-3'. Cleavage occurs on the 3'-side of the TT dinucleotide at the point of strand exchange. HJ branch migration catalyzed by RuvA-RuvB allows RuvC to scan DNA until it finds its consensus sequence, where it cleaves and resolves the cruciform DNA. The sequence is that of Crossover junction endodeoxyribonuclease RuvC from Prochlorococcus marinus (strain SARG / CCMP1375 / SS120).